The chain runs to 173 residues: MMKMMIMSSSNLMNINFMKMNHPMSIMMTIIIQTLFISMMTGTMMESFWLSYILLLTFLGGMMVLFIYITSIASNEMFKIKINSIIIIVYMMIILSTLMYKLDKTISTEMIKNSEIMNLNYSINFKEMSTSLVKLYNNPTVIITIMMMIYLFITLLAVVKITNINQGPMRKMS.

Transmembrane regions (helical) follow at residues Met-24–Met-44, Trp-49–Ile-69, Ile-80–Tyr-100, and Pro-139–Val-159.

It belongs to the complex I subunit 6 family.

The protein localises to the mitochondrion membrane. It carries out the reaction a ubiquinone + NADH + 5 H(+)(in) = a ubiquinol + NAD(+) + 4 H(+)(out). Core subunit of the mitochondrial membrane respiratory chain NADH dehydrogenase (Complex I) that is believed to belong to the minimal assembly required for catalysis. Complex I functions in the transfer of electrons from NADH to the respiratory chain. The immediate electron acceptor for the enzyme is believed to be ubiquinone. In Locusta migratoria (Migratory locust), this protein is NADH-ubiquinone oxidoreductase chain 6 (ND6).